The primary structure comprises 141 residues: MSIQRTLSIIKPDAVAKNVIGQIVARFEQAGLKVIAARLQQLSRADAERFYAVHKERPFFKDLVDFMVSGPVFVQVLEGENAIQVNRDLMGATDPKKAAPGTIRADFADSIDANAVHGSDAPETAAVEVAFFFPEINIHSR.

6 residues coordinate ATP: Lys-11, Phe-59, Arg-87, Thr-93, Arg-104, and Asn-114. Catalysis depends on His-117, which acts as the Pros-phosphohistidine intermediate.

It belongs to the NDK family. As to quaternary structure, homotetramer. Mg(2+) serves as cofactor.

It localises to the cytoplasm. It catalyses the reaction a 2'-deoxyribonucleoside 5'-diphosphate + ATP = a 2'-deoxyribonucleoside 5'-triphosphate + ADP. It carries out the reaction a ribonucleoside 5'-diphosphate + ATP = a ribonucleoside 5'-triphosphate + ADP. Major role in the synthesis of nucleoside triphosphates other than ATP. The ATP gamma phosphate is transferred to the NDP beta phosphate via a ping-pong mechanism, using a phosphorylated active-site intermediate. This is Nucleoside diphosphate kinase from Bordetella avium (strain 197N).